The chain runs to 196 residues: tRNA(Phe) 7-((3-amino-3-carboxypropyl)-4-demethylwyosine(37)-N(4))-methyltransferase 1 (196 aa).

The protein belongs to the TYW3 family.

The enzyme catalyses 4-demethyl-7-[(3S)-3-amino-3-carboxypropyl]wyosine(37) in tRNA(Phe) + S-adenosyl-L-methionine = 7-[(3S)-3-amino-3-carboxypropyl]wyosine(37) in tRNA(Phe) + S-adenosyl-L-homocysteine + H(+). Its function is as follows. S-adenosyl-L-methionine-dependent methyltransferase that acts as a component of the wyosine derivatives biosynthesis pathway. Probably methylates N-4 position of wybutosine-86 to produce wybutosine-72. The protein is tRNA(Phe) 7-((3-amino-3-carboxypropyl)-4-demethylwyosine(37)-N(4))-methyltransferase 1 of Pyrococcus furiosus (strain ATCC 43587 / DSM 3638 / JCM 8422 / Vc1).